A 473-amino-acid polypeptide reads, in one-letter code: Heavy metal-associated isoprenylated plant protein 32 (473 aa).

Residues 9-72 (IQTCVLKVNI…KLAKSGKHAE (64 aa)) form the HMA domain. The a metal cation site is built by Cys20 and Cys23. 3 disordered regions span residues 96 to 139 (QIDH…KMGQ), 162 to 230 (KLPP…PNMT), and 246 to 343 (ANLA…QNMS). Residues 118 to 131 (KNGGGGGGGGGGGN) show a composition bias toward gly residues. Acidic residues predominate over residues 187-217 (PEDDDDDDFSDEFDDEFTDDDDDEFDDEFDD). Over residues 253–339 (AKNGGKGAPA…GFRPMGGGGP (87 aa)) the composition is skewed to gly residues. At Cys470 the chain carries Cysteine methyl ester. Cys470 carries S-farnesyl cysteine lipidation. Positions 471–473 (DIM) are cleaved as a propeptide — removed in mature form.

It belongs to the HIPP family.

In terms of biological role, heavy-metal-binding protein. The protein is Heavy metal-associated isoprenylated plant protein 32 of Arabidopsis thaliana (Mouse-ear cress).